Here is a 334-residue protein sequence, read N- to C-terminus: CRISPR-associated protein Cas1 3 (334 aa).

Residues E165, H230, and E245 each contribute to the Mn(2+) site.

It belongs to the CRISPR-associated endonuclease Cas1 family. Homodimer, forms a heterotetramer with a Cas2 homodimer. Requires Mg(2+) as cofactor. Mn(2+) is required as a cofactor.

CRISPR (clustered regularly interspaced short palindromic repeat), is an adaptive immune system that provides protection against mobile genetic elements (viruses, transposable elements and conjugative plasmids). CRISPR clusters contain spacers, sequences complementary to antecedent mobile elements, and target invading nucleic acids. CRISPR clusters are transcribed and processed into CRISPR RNA (crRNA). Acts as a dsDNA endonuclease. Involved in the integration of spacer DNA into the CRISPR cassette. In Methanobrevibacter ruminantium (strain ATCC 35063 / DSM 1093 / JCM 13430 / OCM 146 / M1) (Methanobacterium ruminantium), this protein is CRISPR-associated protein Cas1 3.